The sequence spans 331 residues: Adenosine deaminase (331 aa).

Residues histidine 12 and histidine 14 each contribute to the Zn(2+) site. The substrate site is built by histidine 14, aspartate 16, and glycine 170. Histidine 197 is a binding site for Zn(2+). Glutamate 200 serves as the catalytic Proton donor. Residue aspartate 278 coordinates Zn(2+).

Belongs to the metallo-dependent hydrolases superfamily. Adenosine and AMP deaminases family. Adenosine deaminase subfamily. It depends on Zn(2+) as a cofactor.

The catalysed reaction is adenosine + H2O + H(+) = inosine + NH4(+). It carries out the reaction 2'-deoxyadenosine + H2O + H(+) = 2'-deoxyinosine + NH4(+). Its function is as follows. Catalyzes the hydrolytic deamination of adenosine and 2-deoxyadenosine. The chain is Adenosine deaminase from Shewanella woodyi (strain ATCC 51908 / MS32).